A 449-amino-acid chain; its full sequence is Phosphoglucosamine mutase (449 aa).

S101 functions as the Phosphoserine intermediate in the catalytic mechanism. 4 residues coordinate Mg(2+): S101, D241, D243, and D245. Phosphoserine is present on S101.

This sequence belongs to the phosphohexose mutase family. The cofactor is Mg(2+). Activated by phosphorylation.

The enzyme catalyses alpha-D-glucosamine 1-phosphate = D-glucosamine 6-phosphate. Its function is as follows. Catalyzes the conversion of glucosamine-6-phosphate to glucosamine-1-phosphate. The chain is Phosphoglucosamine mutase from Ruminiclostridium cellulolyticum (strain ATCC 35319 / DSM 5812 / JCM 6584 / H10) (Clostridium cellulolyticum).